The chain runs to 162 residues: Lymphocyte antigen 86 (162 aa).

The signal sequence occupies residues 1 to 19 (MNGVAAALLVWILTSPSSS). Intrachain disulfides connect Cys-33-Cys-58, Cys-45-Cys-154, and Cys-102-Cys-112. Asn-96 carries an N-linked (GlcNAc...) asparagine glycan. Asn-156 carries N-linked (GlcNAc...) asparagine glycosylation.

In terms of assembly, M-shaped tetramer of two CD180-LY86 heterodimers. As to expression, highly expressed in spleen, liver, brain and thymus, and at lower levels in kidney.

It localises to the secreted. Its subcellular location is the extracellular space. Functionally, may cooperate with CD180 and TLR4 to mediate the innate immune response to bacterial lipopolysaccharide (LPS) and cytokine production. Important for efficient CD180 cell surface expression. The protein is Lymphocyte antigen 86 (Ly86) of Mus musculus (Mouse).